The chain runs to 352 residues: Pyrimidine monooxygenase RutA (352 aa).

FMN is bound by residues 49-50 (IK), asparagine 115, glutamate 124, 140-141 (RY), and serine 189.

This sequence belongs to the NtaA/SnaA/DszA monooxygenase family. RutA subfamily.

It carries out the reaction uracil + FMNH2 + NADH + O2 = (Z)-3-ureidoacrylate + FMN + NAD(+) + H2O + H(+). The catalysed reaction is thymine + FMNH2 + NADH + O2 = (Z)-2-methylureidoacrylate + FMN + NAD(+) + H2O + H(+). In terms of biological role, catalyzes the pyrimidine ring opening between N-3 and C-4 by an unusual flavin hydroperoxide-catalyzed mechanism, adding oxygen atoms in the process to yield ureidoacrylate peracid, that immediately reacts with FMN forming ureidoacrylate and FMN-N(5)-oxide. The FMN-N(5)-oxide reacts spontaneously with NADH to produce FMN. Requires the flavin reductase RutF to regenerate FMN in vivo. The protein is Pyrimidine monooxygenase RutA of Caulobacter segnis (strain ATCC 21756 / DSM 7131 / JCM 7823 / NBRC 15250 / LMG 17158 / TK0059) (Mycoplana segnis).